A 180-amino-acid polypeptide reads, in one-letter code: Formate hydrogenlyase subunit 6 (180 aa).

4Fe-4S ferredoxin-type domains lie at 31 to 60 (GKPEQNPQQCIGCAACVNACPSNALTVETD) and 66 to 95 (LAWEFNLGHCIFCGRCEEVCPTAAIKLSQE). Positions 40, 43, 46, 50, 75, 78, 81, and 85 each coordinate [4Fe-4S] cluster.

As to quaternary structure, FHL comprises of a formate dehydrogenase, unidentified electron carriers and a hydrogenase (isoenzyme 3). In this non-energy conserving pathway, molecular hydrogen and carbodioxide are released from formate.

Probable electron transfer protein for hydrogenase 3. The chain is Formate hydrogenlyase subunit 6 (hycF) from Escherichia coli (strain K12).